The following is a 132-amino-acid chain: Small ribosomal subunit protein uS8 (132 aa).

It belongs to the universal ribosomal protein uS8 family. In terms of assembly, part of the 30S ribosomal subunit. Contacts proteins S5 and S12.

One of the primary rRNA binding proteins, it binds directly to 16S rRNA central domain where it helps coordinate assembly of the platform of the 30S subunit. The polypeptide is Small ribosomal subunit protein uS8 (Bradyrhizobium sp. (strain BTAi1 / ATCC BAA-1182)).